A 750-amino-acid chain; its full sequence is Photosystem I P700 chlorophyll a apoprotein A1 (750 aa).

A run of 8 helical transmembrane segments spans residues 70-93 (VFSA…FHGA), 156-179 (LYCT…FHYH), 195-219 (LNHH…HVSL), 291-309 (IAHH…GHMY), 346-369 (WHAQ…HHMY), 385-411 (LSLF…IFMV), 433-455 (AIIS…LYIH), and 531-549 (FLVH…LILL). Residues Cys-573 and Cys-582 each contribute to the [4Fe-4S] cluster site. Transmembrane regions (helical) follow at residues 589 to 610 (HVFL…HFSW) and 664 to 686 (LSAY…MFLF). Residue His-675 participates in chlorophyll a' binding. Residues Met-683 and Tyr-691 each coordinate chlorophyll a. Phylloquinone is bound at residue Trp-692. The helical transmembrane segment at 724-744 (AVGVTHYLLGGIATTWAFFLA) threads the bilayer.

The protein belongs to the PsaA/PsaB family. As to quaternary structure, the PsaA/B heterodimer binds the P700 chlorophyll special pair and subsequent electron acceptors. PSI consists of a core antenna complex that captures photons, and an electron transfer chain that converts photonic excitation into a charge separation. The eukaryotic PSI reaction center is composed of at least 11 subunits. It depends on P700 is a chlorophyll a/chlorophyll a' dimer, A0 is one or more chlorophyll a, A1 is one or both phylloquinones and FX is a shared 4Fe-4S iron-sulfur center. as a cofactor.

The protein resides in the plastid. The protein localises to the chloroplast thylakoid membrane. It catalyses the reaction reduced [plastocyanin] + hnu + oxidized [2Fe-2S]-[ferredoxin] = oxidized [plastocyanin] + reduced [2Fe-2S]-[ferredoxin]. In terms of biological role, psaA and PsaB bind P700, the primary electron donor of photosystem I (PSI), as well as the electron acceptors A0, A1 and FX. PSI is a plastocyanin-ferredoxin oxidoreductase, converting photonic excitation into a charge separation, which transfers an electron from the donor P700 chlorophyll pair to the spectroscopically characterized acceptors A0, A1, FX, FA and FB in turn. Oxidized P700 is reduced on the lumenal side of the thylakoid membrane by plastocyanin. The chain is Photosystem I P700 chlorophyll a apoprotein A1 from Lobularia maritima (Sweet alyssum).